Here is a 621-residue protein sequence, read N- to C-terminus: uncharacterized protein (621 aa).

A phosphoserine mark is found at Ser-269, Ser-271, Ser-274, Ser-290, and Ser-292. LRR repeat units lie at residues 333–354 (QLLY…VFLS), 357–379 (SLVS…GELP), 380–401 (QLCS…YHIS), 404–425 (HLQI…ENVP), 426–447 (SLEK…RRLV), and 451–472 (NFEE…YRIT). Residues 552–581 (SKNASGGDTSSNVSLLNGSASEEIPQNTES) form a disordered region.

It localises to the cytoplasm. It is found in the nucleus. Its subcellular location is the vacuole membrane. This is an uncharacterized protein from Schizosaccharomyces pombe (strain 972 / ATCC 24843) (Fission yeast).